A 221-amino-acid chain; its full sequence is MNSNVENLPPQVLRLVYKEVSALAADPPEGIKIYPSEEDITELHTSIEGPEGTPYAGGVFRMRLVLGKDFPAVPPRGYFLTKIFHPNVGHKGEICVNVLKRDWKAELGLRHVLLTIKCLLIHPNPESALNEEAGKLLLEDYKEYASRAHLLTEIHAMGGTSGAPQEPADGPQPKKHAGDPNKRVVGAGLPTMGTGTNNSNISNTNIVAKKKTDKKRALRRL.

The UBC core domain occupies 11-157 (QVLRLVYKEV…AHLLTEIHAM (147 aa)). The Glycyl thioester intermediate role is filled by Cys-95. Residues 158-221 (GGTSGAPQEP…TDKKRALRRL (64 aa)) are disordered. The segment covering 193–206 (GTGTNNSNISNTNI) has biased composition (low complexity). Residues 208–221 (AKKKTDKKRALRRL) are compositionally biased toward basic residues.

The protein belongs to the ubiquitin-conjugating enzyme family.

It carries out the reaction S-ubiquitinyl-[E1 ubiquitin-activating enzyme]-L-cysteine + [E2 ubiquitin-conjugating enzyme]-L-cysteine = [E1 ubiquitin-activating enzyme]-L-cysteine + S-ubiquitinyl-[E2 ubiquitin-conjugating enzyme]-L-cysteine.. The protein operates within protein modification; protein ubiquitination. Catalyzes the covalent attachment of ubiquitin to other proteins. Acts as an essential factor of the anaphase promoting complex/cyclosome (APC/C), a cell cycle-regulated ubiquitin ligase that controls progression through mitosis. Acts by specifically elongating 'Lys-11'-linked polyubiquitin chains initiated by the E2 enzyme ube2c/ubch10 on APC/C substrates, enhancing the degradation of APC/C substrates by the proteasome and promoting mitotic exit. The polypeptide is Ubiquitin-conjugating enzyme E2 S (ube2s) (Danio rerio (Zebrafish)).